A 203-amino-acid polypeptide reads, in one-letter code: Nucleoside triphosphate pyrophosphatase (203 aa).

The active-site Proton acceptor is the Asp77.

This sequence belongs to the Maf family. The cofactor is a divalent metal cation.

The protein localises to the cytoplasm. It catalyses the reaction a ribonucleoside 5'-triphosphate + H2O = a ribonucleoside 5'-phosphate + diphosphate + H(+). It carries out the reaction a 2'-deoxyribonucleoside 5'-triphosphate + H2O = a 2'-deoxyribonucleoside 5'-phosphate + diphosphate + H(+). Nucleoside triphosphate pyrophosphatase. May have a dual role in cell division arrest and in preventing the incorporation of modified nucleotides into cellular nucleic acids. The sequence is that of Nucleoside triphosphate pyrophosphatase from Rickettsia felis (strain ATCC VR-1525 / URRWXCal2) (Rickettsia azadi).